The sequence spans 364 residues: Fructose-bisphosphate aldolase B (364 aa).

Alanine 2 carries the post-translational modification N-acetylalanine. N6-succinyllysine is present on lysine 13. Residue serine 36 is modified to Phosphoserine. A Phosphothreonine modification is found at threonine 39. Arginine 43 contributes to the beta-D-fructose 1,6-bisphosphate binding site. Position 89 is a phosphoserine (serine 89). Threonine 119 is subject to Phosphothreonine. At lysine 121 the chain carries N6-succinyllysine. Serine 132 is modified (phosphoserine). The Proton acceptor role is filled by glutamate 188. Lysine 230 serves as the catalytic Schiff-base intermediate with dihydroxyacetone-P. Residues serine 272, serine 276, serine 299, and serine 301 each carry the phosphoserine modification. A beta-D-fructose 1,6-bisphosphate-binding site is contributed by 272-274 (SGG). Arginine 304 serves as a coordination point for beta-D-fructose 1,6-bisphosphate. At serine 309 the chain carries Phosphoserine. Position 317 is an N6-succinyllysine (lysine 317).

It belongs to the class I fructose-bisphosphate aldolase family. As to quaternary structure, homotetramer. Interacts with BBS1, BBS2, BBS4 and BBS7. Forms a ternary complex with G6PD and TP53; this interaction is direct.

It is found in the cytoplasm. Its subcellular location is the cytosol. The protein localises to the cytoskeleton. It localises to the microtubule organizing center. The protein resides in the centrosome. It is found in the centriolar satellite. The catalysed reaction is beta-D-fructose 1,6-bisphosphate = D-glyceraldehyde 3-phosphate + dihydroxyacetone phosphate. It catalyses the reaction beta-D-fructose 1-phosphate = D-glyceraldehyde + dihydroxyacetone phosphate. Its pathway is carbohydrate degradation; glycolysis; D-glyceraldehyde 3-phosphate and glycerone phosphate from D-glucose: step 4/4. It participates in carbohydrate biosynthesis; gluconeogenesis. It functions in the pathway carbohydrate metabolism; fructose metabolism. Catalyzes the aldol cleavage of fructose 1,6-biphosphate to form two triosephosphates dihydroxyacetone phosphate and D-glyceraldehyde 3-phosphate in glycolysis as well as the reverse stereospecific aldol addition reaction in gluconeogenesis. In fructolysis, metabolizes fructose 1-phosphate derived from the phosphorylation of dietary fructose by fructokinase into dihydroxyacetone phosphate and D-glyceraldehyde. Acts as an adapter independently of its enzymatic activity, exerts a tumor suppressor role by stabilizing the ternary complex with G6PD and TP53 to inhibit G6PD activity and keep oxidative pentose phosphate metabolism in check. The chain is Fructose-bisphosphate aldolase B (Aldob) from Rattus norvegicus (Rat).